The chain runs to 515 residues: Maturase K (515 aa).

Belongs to the intron maturase 2 family. MatK subfamily.

It localises to the plastid. It is found in the chloroplast. Usually encoded in the trnK tRNA gene intron. Probably assists in splicing its own and other chloroplast group II introns. In Pinus roxburghii (Chir pine), this protein is Maturase K.